The sequence spans 446 residues: Sorting nexin-30 (446 aa).

Positions 1 to 18 (MSGSSTPKSLPTSGQQSL) are enriched in polar residues. The disordered stretch occupies residues 1 to 84 (MSGSSTPKSL…SSPASSSSLL (84 aa)). Positions 70–84 (TPADTSSPASSSSLL) are enriched in low complexity. Residues 98–219 (RDLFVTVDDP…VFLTAKDLNS (122 aa)) form the PX domain. Arginine 141, glutamine 143, lysine 171, and arginine 185 together coordinate a 1,2-diacyl-sn-glycero-3-phospho-(1D-myo-inositol-3-phosphate). The region spanning 243-446 (KLRNRPVEFA…PLLQDKQEPK (204 aa)) is the BAR domain.

It belongs to the sorting nexin family.

Its subcellular location is the early endosome membrane. In terms of biological role, involved in the regulation of endocytosis and in several stages of intracellular trafficking. Together with snx4, involved in autophagosome assembly. The protein is Sorting nexin-30 (snx30) of Xenopus tropicalis (Western clawed frog).